The sequence spans 198 residues: TATA-box-binding protein (198 aa).

2 repeat units span residues 14–90 (IENI…IKTL) and 105–181 (IQNI…FDKL).

It belongs to the TBP family.

In terms of biological role, general factor that plays a role in the activation of archaeal genes transcribed by RNA polymerase. Binds specifically to the TATA box promoter element which lies close to the position of transcription initiation. This is TATA-box-binding protein from Saccharolobus shibatae (strain ATCC 51178 / DSM 5389 / JCM 8931 / NBRC 15437 / B12) (Sulfolobus shibatae).